We begin with the raw amino-acid sequence, 353 residues long: Deoxyhypusine synthase (353 aa).

NAD(+) is bound by residues S90–S94, T116–G118, E122, and D228. Spermidine is bound at residue E121–E122. Residue D233 coordinates spermidine. G275 serves as a coordination point for NAD(+). H280 lines the spermidine pocket. T300 to A301 contacts NAD(+). Residues G306–D308 and E315–K321 contribute to the spermidine site. K321 functions as the Nucleophile in the catalytic mechanism. E334–A335 is a binding site for NAD(+).

Belongs to the deoxyhypusine synthase family. In terms of assembly, homotetramer. NAD(+) is required as a cofactor.

It catalyses the reaction [eIF5A protein]-L-lysine + spermidine = [eIF5A protein]-deoxyhypusine + propane-1,3-diamine. It participates in protein modification; eIF5A hypusination. Catalyzes the NAD-dependent oxidative cleavage of spermidine and the subsequent transfer of the butylamine moiety of spermidine to the epsilon-amino group of a specific lysine residue of the eIF-5A precursor protein to form the intermediate deoxyhypusine residue. The polypeptide is Deoxyhypusine synthase (dys-1) (Neurospora crassa (strain ATCC 24698 / 74-OR23-1A / CBS 708.71 / DSM 1257 / FGSC 987)).